The primary structure comprises 512 residues: NAD(P) transhydrogenase subunit alpha (512 aa).

Residues 1–400 lie on the Cytoplasmic side of the membrane; sequence MLIGVPRELL…KESKPTDPRV (400 aa). Residues 125–128, Val175, 195–197, and Gly225 contribute to the NAD(+) site; these read QALD and DSR. The tract at residues 375 to 394 is disordered; that stretch reads SAQPKQETKAAPVAEKKESK. 2 helical membrane-spanning segments follow: residues 401-421 and 422-442; these read KYGV…VAPA and AFLS…YVVW. The Cytoplasmic portion of the chain corresponds to 443-451; the sequence is NVSHALHTP. Residues 452–472 form a helical membrane-spanning segment; that stretch reads LMAVTNAISGIIIVGALLQIR. Residues 473 to 478 lie on the Periplasmic side of the membrane; it reads QPTGNL. A helical membrane pass occupies residues 479–499; sequence FIDALAFVAILVASINIFGGF. Residues 500 to 512 lie on the Cytoplasmic side of the membrane; the sequence is RVTQRMLAMFRKG.

The protein belongs to the AlaDH/PNT family. As to quaternary structure, heterodimer of an alpha (PntA) and a beta (PntB) chain.

The protein localises to the cell inner membrane. The enzyme catalyses NAD(+) + NADPH + H(+)(in) = NADH + NADP(+) + H(+)(out). Functionally, the transhydrogenation between NADH and NADP is coupled to respiration and ATP hydrolysis and functions as a proton pump across the membrane. In Haemophilus influenzae (strain ATCC 51907 / DSM 11121 / KW20 / Rd), this protein is NAD(P) transhydrogenase subunit alpha (pntA).